Reading from the N-terminus, the 709-residue chain is DNA helicase/primase complex-associated protein (709 aa).

Residues 141–176 (SGDDGRDQQPPPVDGFGSEMEGEQTCPHAQRHSESP) are disordered.

It belongs to the herpesviridae HEPA family. Associates with the primase and the helicase to form the helicase-primase complex. Interacts with the origin-binding protein. Interacts with the polymerase catalytic subunit.

It is found in the host nucleus. Component of the helicase/primase complex. Unwinds the DNA at the replication forks and generates single-stranded DNA for both leading and lagging strand synthesis. The primase synthesizes short RNA primers on the lagging strand that the polymerase presumably elongates using dNTPs. The primase-associated factor has no known catalytic activity in the complex and may serve to facilitate the formation of the replisome by directly interacting with the origin-binding protein and the polymerase. The protein is DNA helicase/primase complex-associated protein of Epstein-Barr virus (strain B95-8) (HHV-4).